The following is a 439-amino-acid chain: L-tryptophan decarboxylase (439 aa).

Belongs to the phosphatidylserine decarboxylase family.

It catalyses the reaction L-tryptophan + H(+) = tryptamine + CO2. Its pathway is secondary metabolite biosynthesis. Functionally, L-tryptophan decarboxylase; part of the gene cluster that mediates the biosynthesis of psilocybin, a psychotropic tryptamine-derived natural product. The first step in the pathway is the decarboxylation of L-tryptophan to tryptamine by the decarboxylase psiD. PsiD does not decarboxylate phenylalanine, tyrosine, or 5-hydroxy- L -tryptophan (5-HTP). 4-hydroxy-L-tryptophan is accepted as substrate by psiD as well. The cytochrome P450 monooxygenase psiH then converts tryptamine to 4-hydroxytryptamine. The kinase psiK catalyzes the 4-O-phosphorylation step by converting 4-hydroxytryptamine into norbaeocystin. The methyltransferase psiM then catalyzes iterative methyl transfer to the amino group of norbaeocystin to yield psilocybin via a monomethylated intermediate, baeocystin. 4-hydroxy-6-methyl-l-tryptophancan also be converted the decarboxylase PsiD, kinase PsiK, and methyltransferase PsiM into respectively 6-methyl-norbaeocystin, 6-methylbaeocystin, and 6-methylpsilocybin. The chain is L-tryptophan decarboxylase from Psilocybe cyanescens.